A 583-amino-acid polypeptide reads, in one-letter code: Chloroplast sensor kinase, chloroplastic (583 aa).

The N-terminal 50 residues, 1–50 (MSSIYLHGLSRRRRIGSVIVAIYMLDSCGAFLSASGSGRYPGFSYRGLSV), are a transit peptide targeting the chloroplast. The tract at residues 97–277 (LFQELALSQL…SMDTERAALQ (181 aa)) is GAF. C115 is a binding site for [3Fe-4S] cluster. H292 carries the post-translational modification Phosphohistidine; by autocatalysis. The segment at 412 to 442 (AASGSNGPSNSTTSFSGNGSDVSTYTEDDGA) is disordered. Low complexity predominate over residues 414–431 (SGSNGPSNSTTSFSGNGS). The Histidine kinase domain occupies 447-583 (SSLFSEMDLE…ALDWTLRKHW (137 aa)).

This sequence belongs to the chloroplast sensor kinase protein family. Oligomerizes. Requires [3Fe-4S] cluster as cofactor. In terms of processing, autophosphorylates, possibly on His-292.

Its subcellular location is the plastid. The protein localises to the chloroplast stroma. It carries out the reaction ATP + protein L-histidine = ADP + protein N-phospho-L-histidine.. In terms of biological role, sensor kinase that senses the plastoquinone (PQ) redox state involved in stoichiometry adjustment of both photosystems (e.g. long-term adaptation via transcriptional regulation of reaction center genes of photosystems I and II) and state transitions (e.g. short-term adaptation involving reversible post-translational phosphorylation of light-harvesting complex II, LHC II), thus linking photosynthesis with gene expression in chloroplasts. Reduced PQ suppresses its autophosphorylation activity. The chain is Chloroplast sensor kinase, chloroplastic from Phaeodactylum tricornutum (strain CCAP 1055/1).